Consider the following 130-residue polypeptide: D-ribose pyranase (130 aa).

Histidine 20 (proton donor) is an active-site residue. Residues aspartate 28, histidine 97, and 119-121 (YAN) each bind substrate.

Belongs to the RbsD / FucU family. RbsD subfamily. Homodecamer.

The protein localises to the cytoplasm. The enzyme catalyses beta-D-ribopyranose = beta-D-ribofuranose. Its pathway is carbohydrate metabolism; D-ribose degradation; D-ribose 5-phosphate from beta-D-ribopyranose: step 1/2. Catalyzes the interconversion of beta-pyran and beta-furan forms of D-ribose. This is D-ribose pyranase from Paracidovorax citrulli (strain AAC00-1) (Acidovorax citrulli).